We begin with the raw amino-acid sequence, 305 residues long: Superkiller complex protein 8 (305 aa).

Residue M1 is modified to N-acetylmethionine. T2 carries the N-acetylthreonine; in WD repeat-containing protein 61, N-terminally processed modification. WD repeat units lie at residues A14 to Q57, G62 to S101, A104 to S143, T146 to E187, G188 to T227, G230 to T269, and D272 to I305.

Belongs to the SKI8 family. In terms of assembly, component of the PAF1 complex, which consists of CDC73, PAF1, LEO1, CTR9, RTF1 and SKIC8. The PAF1 complex interacts with PHF5A. Within the PAF1 complex interacts directly with PHF5A. Component of the SKI complex which consists of SKIC2, SKIC3 and SKIC8.

The protein localises to the nucleus. It localises to the cytoplasm. Its function is as follows. Component of the PAF1 complex (PAF1C) which has multiple functions during transcription by RNA polymerase II and is implicated in regulation of development and maintenance of embryonic stem cell pluripotency. PAF1C associates with RNA polymerase II through interaction with POLR2A CTD non-phosphorylated and 'Ser-2'- and 'Ser-5'-phosphorylated forms and is involved in transcriptional elongation, acting both independently and synergistically with TCEA1 and in cooperation with the DSIF complex and HTATSF1. PAF1C is required for transcription of Hox and Wnt target genes. PAF1C is involved in hematopoiesis and stimulates transcriptional activity of KMT2A/MLL1; it promotes leukemogenesis through association with KMT2A/MLL1-rearranged oncoproteins, such as KMT2A/MLL1-MLLT3/AF9 and KMT2A/MLL1-MLLT1/ENL. PAF1C is involved in histone modifications such as ubiquitination of histone H2B and methylation on histone H3 'Lys-4' (H3K4me3). PAF1C recruits the RNF20/40 E3 ubiquitin-protein ligase complex and the E2 enzyme UBE2A or UBE2B to chromatin which mediate monoubiquitination of 'Lys-120' of histone H2B (H2BK120ub1); UB2A/B-mediated H2B ubiquitination is proposed to be coupled to transcription. PAF1C is involved in mRNA 3' end formation probably through association with cleavage and poly(A) factors. In case of infection by influenza A strain H3N2, PAF1C associates with viral NS1 protein, thereby regulating gene transcription. Required for mono- and trimethylation on histone H3 'Lys-4' (H3K4me3), dimethylation on histone H3 'Lys-79' (H3K4me3). Required for Hox gene transcription. Also acts as a component of the SKI complex, a multiprotein complex that assists the RNA-degrading exosome during the mRNA decay and quality-control pathways. The SKI complex catalyzes mRNA extraction from 80S ribosomal complexes in the 3'-5' direction and channels mRNA to the cytosolic exosome for degradation. SKI-mediated extraction of mRNA from stalled ribosomes allow binding of the Pelota-HBS1L complex and subsequent ribosome disassembly by ABCE1 for ribosome recycling. The sequence is that of Superkiller complex protein 8 from Homo sapiens (Human).